The following is a 156-amino-acid chain: SsrA-binding protein (156 aa).

Belongs to the SmpB family.

The protein resides in the cytoplasm. Functionally, required for rescue of stalled ribosomes mediated by trans-translation. Binds to transfer-messenger RNA (tmRNA), required for stable association of tmRNA with ribosomes. tmRNA and SmpB together mimic tRNA shape, replacing the anticodon stem-loop with SmpB. tmRNA is encoded by the ssrA gene; the 2 termini fold to resemble tRNA(Ala) and it encodes a 'tag peptide', a short internal open reading frame. During trans-translation Ala-aminoacylated tmRNA acts like a tRNA, entering the A-site of stalled ribosomes, displacing the stalled mRNA. The ribosome then switches to translate the ORF on the tmRNA; the nascent peptide is terminated with the 'tag peptide' encoded by the tmRNA and targeted for degradation. The ribosome is freed to recommence translation, which seems to be the essential function of trans-translation. The protein is SsrA-binding protein of Clostridium tetani (strain Massachusetts / E88).